We begin with the raw amino-acid sequence, 397 residues long: Elongation factor Tu (397 aa).

The region spanning 10–207 (KPHVNIGTIG…ACDSYIPEPE (198 aa)) is the tr-type G domain. The tract at residues 19 to 26 (GHIDHGKT) is G1. 19–26 (GHIDHGKT) contributes to the GTP binding site. Thr26 provides a ligand contact to Mg(2+). Residues 60-64 (GITIA) are G2. The interval 81-84 (DCPG) is G3. Residues 81–85 (DCPGH) and 136–139 (NKCD) contribute to the GTP site. The tract at residues 136-139 (NKCD) is G4. Positions 174–176 (SAL) are G5.

It belongs to the TRAFAC class translation factor GTPase superfamily. Classic translation factor GTPase family. EF-Tu/EF-1A subfamily. In terms of assembly, monomer.

It localises to the cytoplasm. It carries out the reaction GTP + H2O = GDP + phosphate + H(+). GTP hydrolase that promotes the GTP-dependent binding of aminoacyl-tRNA to the A-site of ribosomes during protein biosynthesis. The chain is Elongation factor Tu from Oleidesulfovibrio alaskensis (strain ATCC BAA-1058 / DSM 17464 / G20) (Desulfovibrio alaskensis).